Consider the following 587-residue polypeptide: Inorganic phosphate transporter PHO84 (587 aa).

At 1–67 (MSSVNKDTIH…FGWQQVKTIS (67 aa)) the chain is on the extracellular side. Residue Lys-6 forms a Glycyl lysine isopeptide (Lys-Gly) (interchain with G-Cter in ubiquitin) linkage. A helical membrane pass occupies residues 68–88 (IAGVGFLTDSYDIFAINLGIT). The Cytoplasmic segment spans residues 89 to 108 (MMSYVYWHGSMPGPSQTLLK). A helical membrane pass occupies residues 109–129 (VSTSVGTVIGQFGFGTLADIV). The Extracellular segment spans residues 130–133 (GRKR). Residues 134–154 (IYGMELIIMIVCTILQTTVAH) form a helical membrane-spanning segment. At 155–156 (SP) the chain is on the cytoplasmic side. Residues 157–177 (AINFVAVLTFYRIVMGIGIGG) form a helical membrane-spanning segment. Topologically, residues 178–201 (DYPLSSIITSEFATTKWRGAIMGA) are extracellular. The helical transmembrane segment at 202–222 (VFANQAWGQISGGIIALILVA) threads the bilayer. Over 223-250 (AYKGELEYANSGAECDARCQKACDQMWR) the chain is Cytoplasmic. The chain crosses the membrane as a helical span at residues 251–271 (ILIGLGTVLGLACLYFRLTIP). The Extracellular portion of the chain corresponds to 272–345 (ESPRYQLDVN…RHFGQWKYGK (74 aa)). Lys-298 is covalently cross-linked (Glycyl lysine isopeptide (Lys-Gly) (interchain with G-Cter in ubiquitin)). Thr-302 bears the Phosphothreonine mark. Ser-303 and Ser-316 each carry phosphoserine. Thr-317 is modified (phosphothreonine). Ser-321 is subject to Phosphoserine. A helical membrane pass occupies residues 346 to 366 (ILLGTAGSWFTLDVAFYGLSL). The Cytoplasmic portion of the chain corresponds to 367–395 (NSAVILQTIGYAGSKNVYKKLYDTAVGNL). Residues 396–416 (ILICAGSLPGYWVSVFTVDII) traverse the membrane as a helical segment. Over 417–419 (GRK) the chain is Extracellular. The chain crosses the membrane as a helical span at residues 420–440 (PIQLAGFIILTALFCVIGFAY). Over 441–442 (HK) the chain is Cytoplasmic. A helical transmembrane segment spans residues 443 to 463 (LGDHGLLALYVICQFFQNFGP). Topologically, residues 464–485 (NTTTFIVPGECFPTRYRSTAHG) are extracellular. Residues 486 to 506 (ISAASGKVGAIIAQTALGTLI) traverse the membrane as a helical segment. Residues 507-522 (DHNCARDGKPTNCWLP) lie on the Cytoplasmic side of the membrane. Residues 523 to 543 (HVMEIFALFMLLGIFTTLLIP) form a helical membrane-spanning segment. Residues 544-587 (ETKRKTLEEINELYHDEIDPATLNFRNKNNDIESSSPSQLQHEA) are Extracellular-facing. The interval 568–587 (FRNKNNDIESSSPSQLQHEA) is disordered. Phosphoserine occurs at positions 577, 579, and 581.

The protein belongs to the major facilitator superfamily. Phosphate:H(+) symporter (TC 2.A.1.9) family. May function as a monomer. Phosphorylated; phosphorylation increases after phosphate addition to the growth medium. Post-translationally, ubiquitinated in a phosphate-dependent manner; ubiquitination may influence the trafficking of PHO84 to the cell membrane and serve as a signal for endocytosis and internalization.

The protein resides in the cell membrane. It is found in the vacuole. The enzyme catalyses phosphate(in) + H(+)(in) = phosphate(out) + H(+)(out). The catalysed reaction is Mn(2+)(in) = Mn(2+)(out). It carries out the reaction Zn(2+)(in) = Zn(2+)(out). It catalyses the reaction Cu(2+)(in) = Cu(2+)(out). The enzyme catalyses Co(2+)(in) = Co(2+)(out). Its activity is regulated as follows. Transport activity is inhibited in the presence of the protonophore carbonylcyanide m-chlorophenylhydrazone. Transport activity is inhibited by glycerol-3-phosphate. Transport activity is inhibited by phosphonoacetic acid. Signaling activity is stimulated by glycerol-3-phosphate which acts as a nontransported PHO84 agonist that can trigger PKA signaling. Signaling activity is stimulated by arsenate. Its function is as follows. Proton-coupled high-affinity transporter for external inorganic phosphate. Acts as a transceptor, a membrane protein that in addition to its transporter activity also possesses receptor-like signaling activity; mediates activation of the protein kinase A (PKA) pathway targets during growth induction, triggered by phosphate addition to cells growth-arrested due to previous phosphate starvation. Is not an essential protein, since constitutive, low affinity phosphate transporters exist in yeast. Can function as a low affinity metal transporter that transports manganese, zinc, cobalt and copper. Plays a role in manganese homeostasis predominantly under manganese surplus conditions. The polypeptide is Inorganic phosphate transporter PHO84 (PHO84) (Saccharomyces cerevisiae (strain ATCC 204508 / S288c) (Baker's yeast)).